Consider the following 275-residue polypeptide: 4-diphosphocytidyl-2-C-methyl-D-erythritol kinase (275 aa).

Lys-8 is a catalytic residue. 86–96 (PEGAGLGGGSS) is an ATP binding site. Asp-125 is an active-site residue.

This sequence belongs to the GHMP kinase family. IspE subfamily.

It catalyses the reaction 4-CDP-2-C-methyl-D-erythritol + ATP = 4-CDP-2-C-methyl-D-erythritol 2-phosphate + ADP + H(+). It participates in isoprenoid biosynthesis; isopentenyl diphosphate biosynthesis via DXP pathway; isopentenyl diphosphate from 1-deoxy-D-xylulose 5-phosphate: step 3/6. Functionally, catalyzes the phosphorylation of the position 2 hydroxy group of 4-diphosphocytidyl-2C-methyl-D-erythritol. This chain is 4-diphosphocytidyl-2-C-methyl-D-erythritol kinase, found in Thermus thermophilus (strain ATCC BAA-163 / DSM 7039 / HB27).